The following is a 139-amino-acid chain: Cystatin (139 aa).

An N-terminal signal peptide occupies residues 1–23 (MAGARGCVVLLAAALMLVGAVLG). The Secondary area of contact motif lies at 76–80 (QLVSG). Intrachain disulfides connect cysteine 94–cysteine 104 and cysteine 118–cysteine 138. Residue serine 103 is modified to Phosphoserine.

Belongs to the cystatin family.

The protein localises to the secreted. This protein binds tightly to and inhibits a variety of thiol proteases including ficin, papain, and cathepsins B, C, H, and L. Although isolated from egg white, it is also present in serum. This chain is Cystatin, found in Gallus gallus (Chicken).